The chain runs to 380 residues: Histidinol-phosphate aminotransferase (380 aa).

Lys-232 is subject to N6-(pyridoxal phosphate)lysine.

The protein belongs to the class-II pyridoxal-phosphate-dependent aminotransferase family. Histidinol-phosphate aminotransferase subfamily. As to quaternary structure, homodimer. Pyridoxal 5'-phosphate is required as a cofactor.

The enzyme catalyses L-histidinol phosphate + 2-oxoglutarate = 3-(imidazol-4-yl)-2-oxopropyl phosphate + L-glutamate. It functions in the pathway amino-acid biosynthesis; L-histidine biosynthesis; L-histidine from 5-phospho-alpha-D-ribose 1-diphosphate: step 7/9. In Mycobacterium bovis (strain BCG / Pasteur 1173P2), this protein is Histidinol-phosphate aminotransferase.